The chain runs to 473 residues: Bifunctional protein GlmU (473 aa).

The interval 1 to 226 (MRAPVAVVIL…AGEASGINDL (226 aa)) is pyrophosphorylase. UDP-N-acetyl-alpha-D-glucosamine contacts are provided by residues 10 to 13 (LAAG), lysine 24, glutamine 75, 80 to 81 (GT), 102 to 104 (YGD), glycine 136, glutamate 151, asparagine 166, and asparagine 224. Aspartate 104 serves as a coordination point for Mg(2+). Asparagine 224 is a Mg(2+) binding site. The interval 227–247 (VQLAEVEEAFQRRWARRLLQG) is linker. The interval 248-473 (GLRLVAPHRF…TPASGGAKEE (226 aa)) is N-acetyltransferase. 2 residues coordinate UDP-N-acetyl-alpha-D-glucosamine: arginine 330 and lysine 348. The active-site Proton acceptor is histidine 360. UDP-N-acetyl-alpha-D-glucosamine is bound by residues tyrosine 363 and asparagine 374. Acetyl-CoA contacts are provided by residues alanine 377, 383-384 (NY), serine 402, alanine 420, and arginine 437. The tract at residues 439-473 (RARTIPGWQHPGLTGRRGPPDDNDATPASGGAKEE) is disordered.

In the N-terminal section; belongs to the N-acetylglucosamine-1-phosphate uridyltransferase family. The protein in the C-terminal section; belongs to the transferase hexapeptide repeat family. Homotrimer. Requires Mg(2+) as cofactor.

It is found in the cytoplasm. The enzyme catalyses alpha-D-glucosamine 1-phosphate + acetyl-CoA = N-acetyl-alpha-D-glucosamine 1-phosphate + CoA + H(+). It carries out the reaction N-acetyl-alpha-D-glucosamine 1-phosphate + UTP + H(+) = UDP-N-acetyl-alpha-D-glucosamine + diphosphate. The protein operates within nucleotide-sugar biosynthesis; UDP-N-acetyl-alpha-D-glucosamine biosynthesis; N-acetyl-alpha-D-glucosamine 1-phosphate from alpha-D-glucosamine 6-phosphate (route II): step 2/2. It participates in nucleotide-sugar biosynthesis; UDP-N-acetyl-alpha-D-glucosamine biosynthesis; UDP-N-acetyl-alpha-D-glucosamine from N-acetyl-alpha-D-glucosamine 1-phosphate: step 1/1. It functions in the pathway bacterial outer membrane biogenesis; LPS lipid A biosynthesis. Its function is as follows. Catalyzes the last two sequential reactions in the de novo biosynthetic pathway for UDP-N-acetylglucosamine (UDP-GlcNAc). The C-terminal domain catalyzes the transfer of acetyl group from acetyl coenzyme A to glucosamine-1-phosphate (GlcN-1-P) to produce N-acetylglucosamine-1-phosphate (GlcNAc-1-P), which is converted into UDP-GlcNAc by the transfer of uridine 5-monophosphate (from uridine 5-triphosphate), a reaction catalyzed by the N-terminal domain. The protein is Bifunctional protein GlmU of Halorhodospira halophila (strain DSM 244 / SL1) (Ectothiorhodospira halophila (strain DSM 244 / SL1)).